We begin with the raw amino-acid sequence, 465 residues long: Deoxyguanosinetriphosphate triphosphohydrolase-like protein (465 aa).

Positions 1–22 (MKWDKLLNDKRRRESGVTRSKN) are disordered. The region spanning 63–252 (RLTHSMEVST…LEVADDIAYL (190 aa)) is the HD domain.

This sequence belongs to the dGTPase family. Type 3 subfamily.

In Listeria innocua serovar 6a (strain ATCC BAA-680 / CLIP 11262), this protein is Deoxyguanosinetriphosphate triphosphohydrolase-like protein.